The primary structure comprises 820 residues: Quinate repressor protein (820 aa).

The tract at residues 25-79 (SFEQMLLQQDSNESSRRTSPSRTHSRVDLERHSSHIVSLSSSNGSPSLEDPENRL) is disordered. Residues 59–71 (HIVSLSSSNGSPS) show a composition bias toward low complexity.

The protein in the N-terminal section; belongs to the shikimate kinase family. It in the 2nd section; belongs to the type-I 3-dehydroquinase family. This sequence in the C-terminal section; belongs to the shikimate dehydrogenase family. As to quaternary structure, interacts with qutA; transcriptional activator of the quinate utilization pathway genes.

Multi-domain repressor protein that negatively regulates transcription of the quinate utilization pathway genes. May mediate its repressor activity by binding directly to the qutA activator protein. The protein is Quinate repressor protein (qutR) of Talaromyces stipitatus (strain ATCC 10500 / CBS 375.48 / QM 6759 / NRRL 1006) (Penicillium stipitatum).